The following is a 244-amino-acid chain: Glutathione S-transferase theta-2 (244 aa).

Residues 2-82 enclose the GST N-terminal domain; sequence GLELYLDLLS…YLSSKYQVAD (81 aa). Residues 40 to 41, 53 to 54, 66 to 67, and 104 to 107 each bind glutathione; these read HL, KV, ES, and DNIR. Positions 88-230 constitute a GST C-terminal domain; that stretch reads DLQARAQVHE…AKKTLPVPPP (143 aa).

Belongs to the GST superfamily. Theta family. As to quaternary structure, homodimer. In terms of tissue distribution, highest values found in liver followed by testis, adrenal gland, kidney, lung, brain and skeletal muscle. In liver, highest expression found in central vein limiting plate hepatocytes. In lung, expressed mainly in club cells of the bronchiolar epithelium and, at low levels, in type II alveolar cells.

It localises to the cytoplasm. The protein localises to the cytosol. It is found in the nucleus. It carries out the reaction RX + glutathione = an S-substituted glutathione + a halide anion + H(+). Functionally, catalyzes the inactivation of reactive sulfate esters in carcinogenic arylmethanols. Highest activity towards ethacrynic acid and cumene hydroperoxide. The sequence is that of Glutathione S-transferase theta-2 (Gstt2) from Rattus norvegicus (Rat).